Consider the following 486-residue polypeptide: Glutamyl-tRNA(Gln) amidotransferase subunit A (486 aa).

Catalysis depends on charge relay system residues Lys74 and Ser149. Residue Ser173 is the Acyl-ester intermediate of the active site.

This sequence belongs to the amidase family. GatA subfamily. In terms of assembly, heterotrimer of A, B and C subunits.

The enzyme catalyses L-glutamyl-tRNA(Gln) + L-glutamine + ATP + H2O = L-glutaminyl-tRNA(Gln) + L-glutamate + ADP + phosphate + H(+). Functionally, allows the formation of correctly charged Gln-tRNA(Gln) through the transamidation of misacylated Glu-tRNA(Gln) in organisms which lack glutaminyl-tRNA synthetase. The reaction takes place in the presence of glutamine and ATP through an activated gamma-phospho-Glu-tRNA(Gln). This chain is Glutamyl-tRNA(Gln) amidotransferase subunit A, found in Prochlorococcus marinus (strain NATL2A).